Here is a 166-residue protein sequence, read N- to C-terminus: uncharacterized protein (166 aa).

Residues 25–116 (PEEPPLWVPP…QGADEVHSQH (92 aa)) are disordered. Serine 105 carries the phosphoserine modification.

This is an uncharacterized protein from Rattus norvegicus (Rat).